Reading from the N-terminus, the 419-residue chain is CCA-adding enzyme (419 aa).

Residues S54 and R57 each coordinate ATP. CTP contacts are provided by S54 and R57. Mg(2+)-binding residues include D66, D68, and D118. The ATP site is built by H141, K161, and Y170. CTP-binding residues include H141, K161, and Y170.

It belongs to the tRNA nucleotidyltransferase/poly(A) polymerase family. Archaeal CCA-adding enzyme subfamily. In terms of assembly, homodimer. Mg(2+) is required as a cofactor.

It catalyses the reaction a tRNA precursor + 2 CTP + ATP = a tRNA with a 3' CCA end + 3 diphosphate. The enzyme catalyses a tRNA with a 3' CCA end + 2 CTP + ATP = a tRNA with a 3' CCACCA end + 3 diphosphate. Functionally, catalyzes the addition and repair of the essential 3'-terminal CCA sequence in tRNAs without using a nucleic acid template. Adds these three nucleotides in the order of C, C, and A to the tRNA nucleotide-73, using CTP and ATP as substrates and producing inorganic pyrophosphate. tRNA 3'-terminal CCA addition is required both for tRNA processing and repair. Also involved in tRNA surveillance by mediating tandem CCA addition to generate a CCACCA at the 3' terminus of unstable tRNAs. While stable tRNAs receive only 3'-terminal CCA, unstable tRNAs are marked with CCACCA and rapidly degraded. The chain is CCA-adding enzyme from Pyrobaculum aerophilum (strain ATCC 51768 / DSM 7523 / JCM 9630 / CIP 104966 / NBRC 100827 / IM2).